The following is a 340-amino-acid chain: GTP 3',8-cyclase (340 aa).

Residues 20–246 form the Radical SAM core domain; the sequence is RFERQYVYLR…PKALSDGPAK (227 aa). R29 lines the GTP pocket. Residues C36 and C40 each coordinate [4Fe-4S] cluster. S-adenosyl-L-methionine is bound at residue Y42. [4Fe-4S] cluster is bound at residue C43. R79 contacts GTP. G83 provides a ligand contact to S-adenosyl-L-methionine. T110 is a binding site for GTP. S134 lines the S-adenosyl-L-methionine pocket. A GTP-binding site is contributed by K171. M205 contributes to the S-adenosyl-L-methionine binding site. Positions 268 and 271 each coordinate [4Fe-4S] cluster. 273–275 contributes to the GTP binding site; that stretch reads RLR. C285 contributes to the [4Fe-4S] cluster binding site.

Belongs to the radical SAM superfamily. MoaA family. Monomer and homodimer. The cofactor is [4Fe-4S] cluster.

It catalyses the reaction GTP + AH2 + S-adenosyl-L-methionine = (8S)-3',8-cyclo-7,8-dihydroguanosine 5'-triphosphate + 5'-deoxyadenosine + L-methionine + A + H(+). The protein operates within cofactor biosynthesis; molybdopterin biosynthesis. Functionally, catalyzes the cyclization of GTP to (8S)-3',8-cyclo-7,8-dihydroguanosine 5'-triphosphate. The sequence is that of GTP 3',8-cyclase from Actinobacillus pleuropneumoniae serotype 7 (strain AP76).